A 210-amino-acid polypeptide reads, in one-letter code: dTTP/UTP pyrophosphatase (210 aa).

Asp-89 (proton acceptor) is an active-site residue.

The protein belongs to the Maf family. YhdE subfamily. The cofactor is a divalent metal cation.

It localises to the cytoplasm. It catalyses the reaction dTTP + H2O = dTMP + diphosphate + H(+). The enzyme catalyses UTP + H2O = UMP + diphosphate + H(+). Nucleoside triphosphate pyrophosphatase that hydrolyzes dTTP and UTP. May have a dual role in cell division arrest and in preventing the incorporation of modified nucleotides into cellular nucleic acids. This Burkholderia lata (strain ATCC 17760 / DSM 23089 / LMG 22485 / NCIMB 9086 / R18194 / 383) protein is dTTP/UTP pyrophosphatase.